A 311-amino-acid chain; its full sequence is Mas-related G-protein coupled receptor member E (311 aa).

Residues 1 to 25 (MEPREAGQHAGAADGAQEDVAFNLV) are Extracellular-facing. A helical membrane pass occupies residues 26 to 46 (ILSLTEGLGLGGLLGNGAVLW). The Cytoplasmic segment spans residues 47 to 63 (LLSSNVYRNPFAIYLLD). Residues 64–84 (VACADLIFLGCHMVAIIPDLL) traverse the membrane as a helical segment. Over 85-95 (QGRLDFPGFVQ) the chain is Extracellular. The helical transmembrane segment at 96–116 (TSLATLRFFCYIVGLSLLVAV) threads the bilayer. The Cytoplasmic segment spans residues 117-136 (SVEQCLAALFPAWYSCRRPR). Residues 137 to 157 (HLTTCVCALTWACCLLLHLLL) form a helical membrane-spanning segment. Topologically, residues 158–177 (SGACTQFFGEPSRHLCRTLW) are extracellular. A helical membrane pass occupies residues 178 to 198 (LVAAVLLAVLCCTMCGASLML). Over 199 to 216 (LLQVERGPQRPPPRGFPT) the chain is Cytoplasmic. The helical transmembrane segment at 217–237 (LILLAVLLFLFCGLPFGIYWL) threads the bilayer. Topologically, residues 238-251 (SRNLLWHIPHYFYH) are extracellular. The chain crosses the membrane as a helical span at residues 252-272 (FSFLTAAVYCAAKPVVYFCLG). Topologically, residues 273 to 311 (SAQGRRLPLRLVLQRALGDEAELGAVRETSRRGLVDIAA) are cytoplasmic.

Belongs to the G-protein coupled receptor 1 family. Mas subfamily.

It localises to the cell membrane. Orphan receptor. May regulate nociceptor function and/or development, including the sensation or modulation of pain. The sequence is that of Mas-related G-protein coupled receptor member E (MRGPRE) from Macaca fascicularis (Crab-eating macaque).